We begin with the raw amino-acid sequence, 103 residues long: N(4)-acetylcytidine amidohydrolase (103 aa).

The ASCH domain occupies 6–94 (ITFFQRFQND…IAEIYPNQTQ (89 aa)). The active-site Proton acceptor is the lysine 21. Catalysis depends on threonine 24, which acts as the Nucleophile. The Proton donor role is filled by glutamate 74.

It belongs to the N(4)-acetylcytidine amidohydrolase family.

The enzyme catalyses N(4)-acetylcytidine + H2O = cytidine + acetate + H(+). It catalyses the reaction N(4)-acetyl-2'-deoxycytidine + H2O = 2'-deoxycytidine + acetate + H(+). It carries out the reaction N(4)-acetylcytosine + H2O = cytosine + acetate + H(+). Functionally, catalyzes the hydrolysis of N(4)-acetylcytidine (ac4C). This Salmonella schwarzengrund (strain CVM19633) protein is N(4)-acetylcytidine amidohydrolase (yqfB).